We begin with the raw amino-acid sequence, 349 residues long: Anthranilate phosphoribosyltransferase (349 aa).

5-phospho-alpha-D-ribose 1-diphosphate is bound by residues Gly-86, 89 to 90 (GD), Thr-94, 96 to 99 (NIST), 114 to 122 (KHGNKSASG), and Ser-126. Gly-86 is a binding site for anthranilate. A Mg(2+)-binding site is contributed by Ser-98. Asn-117 is a binding site for anthranilate. Arg-172 is an anthranilate binding site. Mg(2+) contacts are provided by Asp-231 and Glu-232.

Belongs to the anthranilate phosphoribosyltransferase family. In terms of assembly, homodimer. Mg(2+) is required as a cofactor.

It carries out the reaction N-(5-phospho-beta-D-ribosyl)anthranilate + diphosphate = 5-phospho-alpha-D-ribose 1-diphosphate + anthranilate. Its pathway is amino-acid biosynthesis; L-tryptophan biosynthesis; L-tryptophan from chorismate: step 2/5. Functionally, catalyzes the transfer of the phosphoribosyl group of 5-phosphorylribose-1-pyrophosphate (PRPP) to anthranilate to yield N-(5'-phosphoribosyl)-anthranilate (PRA). The polypeptide is Anthranilate phosphoribosyltransferase (Prochlorococcus marinus (strain MIT 9312)).